We begin with the raw amino-acid sequence, 361 residues long: Probable cytosolic iron-sulfur protein assembly protein 1 (361 aa).

WD repeat units follow at residues 10–49 (AHSD…NFPQ), 56–105 (THKR…TEIL), 120–160 (GHEN…EEFE), 167–206 (DHQH…DDWS), 213–265 (GHEG…SIKH), 280–319 (VHQY…SWSI), and 327–361 (HGVH…IWKP).

It belongs to the WD repeat CIA1 family. Interacts with NAR1.

It localises to the cytoplasm. It is found in the nucleus. Essential component of the cytosolic iron-sulfur (Fe/S) protein assembly machinery. Required for the maturation of extramitochondrial Fe/S proteins. This is Probable cytosolic iron-sulfur protein assembly protein 1 from Scheffersomyces stipitis (strain ATCC 58785 / CBS 6054 / NBRC 10063 / NRRL Y-11545) (Yeast).